The sequence spans 412 residues: Short-chain specific acyl-CoA dehydrogenase, mitochondrial (412 aa).

A mitochondrion-targeting transit peptide spans 1–24 (MAAALLARARGPLRRALGVRDWRR). Threonine 27 carries the phosphothreonine modification. Residue lysine 51 is modified to N6-acetyllysine; alternate. N6-succinyllysine; alternate is present on lysine 51. Lysine 72 is modified (N6-acetyllysine). Position 129 is an N6-acetyllysine; alternate (lysine 129). Lysine 129 carries the post-translational modification N6-succinyllysine; alternate. FAD-binding positions include 152 to 161 (FALSEPGNGS) and 185 to 187 (WIT). Serine 161 is a binding site for substrate. N6-acetyllysine is present on lysine 208. Lysine 262 bears the N6-acetyllysine; alternate mark. Residue lysine 262 is modified to N6-succinyllysine; alternate. Residue 269 to 272 (DMGR) coordinates substrate. At lysine 292 the chain carries N6-acetyllysine. Residue arginine 297 coordinates FAD. Lysine 306 carries the N6-acetyllysine; alternate modification. Residue lysine 306 is modified to N6-succinyllysine; alternate. Residues glutamine 308 and 365–369 (QILGG) each bind FAD. Glutamate 392 (proton acceptor) is an active-site residue. Glycine 393 provides a ligand contact to substrate. 394-396 (TSE) is a binding site for FAD.

This sequence belongs to the acyl-CoA dehydrogenase family. In terms of assembly, homotetramer. FAD is required as a cofactor.

The protein localises to the mitochondrion matrix. It catalyses the reaction a short-chain 2,3-saturated fatty acyl-CoA + oxidized [electron-transfer flavoprotein] + H(+) = a short-chain (2E)-enoyl-CoA + reduced [electron-transfer flavoprotein]. It carries out the reaction butanoyl-CoA + oxidized [electron-transfer flavoprotein] + H(+) = (2E)-butenoyl-CoA + reduced [electron-transfer flavoprotein]. The catalysed reaction is pentanoyl-CoA + oxidized [electron-transfer flavoprotein] + H(+) = (2E)-pentenoyl-CoA + reduced [electron-transfer flavoprotein]. The enzyme catalyses hexanoyl-CoA + oxidized [electron-transfer flavoprotein] + H(+) = (2E)-hexenoyl-CoA + reduced [electron-transfer flavoprotein]. It participates in lipid metabolism; mitochondrial fatty acid beta-oxidation. Its function is as follows. Short-chain specific acyl-CoA dehydrogenase is one of the acyl-CoA dehydrogenases that catalyze the first step of mitochondrial fatty acid beta-oxidation, an aerobic process breaking down fatty acids into acetyl-CoA and allowing the production of energy from fats. The first step of fatty acid beta-oxidation consists in the removal of one hydrogen from C-2 and C-3 of the straight-chain fatty acyl-CoA thioester, resulting in the formation of trans-2-enoyl-CoA. Among the different mitochondrial acyl-CoA dehydrogenases, short-chain specific acyl-CoA dehydrogenase acts specifically on acyl-CoAs with saturated 4 to 6 carbons long primary chains. The sequence is that of Short-chain specific acyl-CoA dehydrogenase, mitochondrial (Acads) from Mus musculus (Mouse).